Here is a 174-residue protein sequence, read N- to C-terminus: uncharacterized protein (174 aa).

Belongs to the archaeal NMN adenylyltransferase family.

This is an uncharacterized protein from Archaeoglobus fulgidus (strain ATCC 49558 / DSM 4304 / JCM 9628 / NBRC 100126 / VC-16).